The following is a 242-amino-acid chain: MSNETPQQPTPANELLEALGTTLSPDLLVQALTHRSFSHEHPGVANYERLEFLGDAVLELVSTETLFTIHPDMTEGQLAKMRAKAVSEDALSAIAKTKLKVGPYILLGHGEAEQGGAEKNSILCDIVESLIGATFLEHGIDEARKVIHRLIDDTLAEVATEGPALDWKTSLTVKAHGLGKEEPVYHMEVSGPEYAQIFTARVSLGENGDIIGIGKGSSKRKAQLAAAEAGWKSLDSFKTRTK.

An RNase III domain is found at 12–139 (ANELLEALGT…LIGATFLEHG (128 aa)). Residue Glu51 participates in Mg(2+) binding. Residue Asp55 is part of the active site. Residues Asp125 and Glu128 each coordinate Mg(2+). The active site involves Glu128. A DRBM domain is found at 165-236 (LDWKTSLTVK…AEAGWKSLDS (72 aa)).

It belongs to the ribonuclease III family. Homodimer. It depends on Mg(2+) as a cofactor.

Its subcellular location is the cytoplasm. It catalyses the reaction Endonucleolytic cleavage to 5'-phosphomonoester.. In terms of biological role, digests double-stranded RNA. Involved in the processing of primary rRNA transcript to yield the immediate precursors to the large and small rRNAs (23S and 16S). Processes some mRNAs, and tRNAs when they are encoded in the rRNA operon. Processes pre-crRNA and tracrRNA of type II CRISPR loci if present in the organism. The sequence is that of Ribonuclease 3 from Bifidobacterium longum (strain NCC 2705).